A 622-amino-acid chain; its full sequence is Chaperone protein HtpG (622 aa).

Residues 1–334 form an a; substrate-binding region; sequence MKGQETRGFQ…SNDLPLNVSR (334 aa). Positions 335-550 are b; that stretch reads EILQDSRITQ…ADEMSTQMAK (216 aa). Residues 551–622 form a c region; sequence LFAAAGQQAP…IRRMNQLLTA (72 aa).

The protein belongs to the heat shock protein 90 family. As to quaternary structure, homodimer.

Its subcellular location is the cytoplasm. In terms of biological role, molecular chaperone. Has ATPase activity. This is Chaperone protein HtpG from Yersinia pestis.